A 1479-amino-acid chain; its full sequence is C-type mannose receptor 2 (1479 aa).

A signal peptide spans methionine 1–proline 30. Topologically, residues glycine 31–alanine 1414 are extracellular. In terms of domain architecture, Ricin B-type lectin spans proline 41 to leucine 167. Cysteine 54 and cysteine 68 are joined by a disulfide. N-linked (GlcNAc...) (complex) asparagine glycosylation is present at asparagine 69. Cysteine 93 and cysteine 112 are joined by a disulfide. A glycan (N-linked (GlcNAc...) asparagine) is linked at asparagine 140. The 49-residue stretch at serine 182–isoleucine 230 folds into the Fibronectin type-II domain. 4 disulfides stabilise this stretch: cysteine 187–cysteine 213, cysteine 201–cysteine 228, cysteine 266–cysteine 359, and cysteine 335–cysteine 351. A C-type lectin 1 domain is found at leucine 244 to lysine 360. The N-linked (GlcNAc...) asparagine glycan is linked to asparagine 364. C-type lectin domains are found at residues phenylalanine 389–lysine 505, histidine 528–cysteine 644, lysine 678–lysine 809, and phenylalanine 832–lysine 951. Intrachain disulfides connect cysteine 410–cysteine 504 and cysteine 481–cysteine 496. An N-linked (GlcNAc...) asparagine glycan is attached at asparagine 588. Disulfide bonds link cysteine 618–cysteine 635, cysteine 704–cysteine 808, cysteine 785–cysteine 800, cysteine 853–cysteine 950, and cysteine 927–cysteine 942. N-linked (GlcNAc...) asparagine glycosylation is found at asparagine 954 and asparagine 1029. C-type lectin domains lie at phenylalanine 979 to cysteine 1107, tyrosine 1132 to cysteine 1243, and phenylalanine 1273 to cysteine 1393. Cysteines 1078 and 1098 form a disulfide. Lysine 1142 is covalently cross-linked (Glycyl lysine isopeptide (Lys-Gly) (interchain with G-Cter in SUMO1)). Cysteine 1220 and cysteine 1234 form a disulfide bridge. A glycan (N-linked (GlcNAc...) asparagine) is linked at asparagine 1350. Cysteine 1369 and cysteine 1384 are oxidised to a cystine. The chain crosses the membrane as a helical span at residues leucine 1415–leucine 1435. The Cytoplasmic portion of the chain corresponds to tyrosine 1436–glutamate 1479. Residues alanine 1450–glutamate 1479 form a disordered region.

Interacts with C-terminal region of type I collagen/COL1A1. Interacts directly with PLAUR/UPAR and PLAU/pro-UPA to form a tri-molecular complex. Interacts with collagen V. In terms of processing, N-glycosylated. As to expression, ubiquitous with low expression in brain, placenta, lung, kidney, pancreas, spleen, thymus and colon. Expressed in endothelial cells, fibroblasts and macrophages. Highly expressed in fetal lung and kidney.

The protein resides in the membrane. In terms of biological role, may play a role as endocytotic lectin receptor displaying calcium-dependent lectin activity. Internalizes glycosylated ligands from the extracellular space for release in an endosomal compartment via clathrin-mediated endocytosis. May be involved in plasminogen activation system controlling the extracellular level of PLAUR/PLAU, and thus may regulate protease activity at the cell surface. May contribute to cellular uptake, remodeling and degradation of extracellular collagen matrices. May play a role during cancer progression as well as in other chronic tissue destructive diseases acting on collagen turnover. May participate in remodeling of extracellular matrix cooperating with the matrix metalloproteinases (MMPs). This is C-type mannose receptor 2 (MRC2) from Homo sapiens (Human).